Consider the following 253-residue polypeptide: Acetylglutamate kinase (253 aa).

Substrate is bound by residues 40-41, arginine 62, and asparagine 154; that span reads GG.

This sequence belongs to the acetylglutamate kinase family. ArgB subfamily.

Its subcellular location is the cytoplasm. It catalyses the reaction N-acetyl-L-glutamate + ATP = N-acetyl-L-glutamyl 5-phosphate + ADP. The protein operates within amino-acid biosynthesis; L-arginine biosynthesis; N(2)-acetyl-L-ornithine from L-glutamate: step 2/4. In terms of biological role, catalyzes the ATP-dependent phosphorylation of N-acetyl-L-glutamate. The polypeptide is Acetylglutamate kinase (Staphylococcus saprophyticus subsp. saprophyticus (strain ATCC 15305 / DSM 20229 / NCIMB 8711 / NCTC 7292 / S-41)).